The following is a 355-amino-acid chain: NADH-quinone oxidoreductase subunit H (355 aa).

The next 8 membrane-spanning stretches (helical) occupy residues Ile17 to Ile37, Gly86 to Ile106, Val119 to Gly139, Ile165 to Val185, Ile204 to Leu224, Tyr262 to Pro282, Trp291 to Met311, and Phe332 to Ile352.

The protein belongs to the complex I subunit 1 family. NDH-1 is composed of 14 different subunits. Subunits NuoA, H, J, K, L, M, N constitute the membrane sector of the complex.

Its subcellular location is the cell inner membrane. The catalysed reaction is a quinone + NADH + 5 H(+)(in) = a quinol + NAD(+) + 4 H(+)(out). In terms of biological role, NDH-1 shuttles electrons from NADH, via FMN and iron-sulfur (Fe-S) centers, to quinones in the respiratory chain. The immediate electron acceptor for the enzyme in this species is believed to be ubiquinone. Couples the redox reaction to proton translocation (for every two electrons transferred, four hydrogen ions are translocated across the cytoplasmic membrane), and thus conserves the redox energy in a proton gradient. This subunit may bind ubiquinone. In Bradyrhizobium diazoefficiens (strain JCM 10833 / BCRC 13528 / IAM 13628 / NBRC 14792 / USDA 110), this protein is NADH-quinone oxidoreductase subunit H.